The primary structure comprises 401 residues: Phosphoglycerate kinase (401 aa).

Residues 23 to 25 (DLN), arginine 38, 61 to 64 (HFGR), arginine 120, and arginine 153 contribute to the substrate site. ATP is bound by residues lysine 203, glutamate 325, and 355–358 (GGDT).

This sequence belongs to the phosphoglycerate kinase family. Monomer.

The protein resides in the cytoplasm. It carries out the reaction (2R)-3-phosphoglycerate + ATP = (2R)-3-phospho-glyceroyl phosphate + ADP. The protein operates within carbohydrate degradation; glycolysis; pyruvate from D-glyceraldehyde 3-phosphate: step 2/5. This Rhizobium johnstonii (strain DSM 114642 / LMG 32736 / 3841) (Rhizobium leguminosarum bv. viciae) protein is Phosphoglycerate kinase.